Consider the following 149-residue polypeptide: Nucleoside diphosphate kinase (149 aa).

Lys9, Phe57, Arg85, Thr91, Arg102, and Asn112 together coordinate ATP. His115 functions as the Pros-phosphohistidine intermediate in the catalytic mechanism.

This sequence belongs to the NDK family. As to quaternary structure, homotetramer. The cofactor is Mg(2+).

The protein resides in the cytoplasm. The catalysed reaction is a 2'-deoxyribonucleoside 5'-diphosphate + ATP = a 2'-deoxyribonucleoside 5'-triphosphate + ADP. It catalyses the reaction a ribonucleoside 5'-diphosphate + ATP = a ribonucleoside 5'-triphosphate + ADP. In terms of biological role, major role in the synthesis of nucleoside triphosphates other than ATP. The ATP gamma phosphate is transferred to the NDP beta phosphate via a ping-pong mechanism, using a phosphorylated active-site intermediate. The protein is Nucleoside diphosphate kinase of Roseiflexus castenholzii (strain DSM 13941 / HLO8).